A 341-amino-acid polypeptide reads, in one-letter code: HTH-type transcriptional repressor PurR (341 aa).

One can recognise an HTH lacI-type domain in the interval 2–56 (ATIKDVAKRANVSTTTVSHVINKTRFVAEETRNAVWAAIKELHYSPSAVARSLKV). Positions 4 to 23 (IKDVAKRANVSTTTVSHVIN) form a DNA-binding region, H-T-H motif. A DNA-binding region spans residues 48–56 (SAVARSLKV). Positions 73, 190, 192, 221, and 275 each coordinate hypoxanthine.

As to quaternary structure, homodimer.

It functions in the pathway purine metabolism; purine nucleotide biosynthesis [regulation]. Is the main repressor of the genes involved in the de novo synthesis of purine nucleotides, regulating purB, purC, purEK, purF, purHD, purL, purMN and guaBA expression. PurR is allosterically activated to bind its cognate DNA by binding the purine corepressors, hypoxanthine or guanine, thereby effecting transcription repression. The chain is HTH-type transcriptional repressor PurR from Salmonella arizonae (strain ATCC BAA-731 / CDC346-86 / RSK2980).